The sequence spans 351 residues: DNA-directed RNA polymerase subunit alpha (351 aa).

The alpha N-terminal domain (alpha-NTD) stretch occupies residues 1–236; it reads MSVNTKNWQE…DQLTLFVHFE (236 aa). Residues 256-351 are alpha C-terminal domain (alpha-CTD); it reads DDANQLNRYL…AKKLEQELLG (96 aa).

The protein belongs to the RNA polymerase alpha chain family. Homodimer. The RNAP catalytic core consists of 2 alpha, 1 beta, 1 beta' and 1 omega subunit. When a sigma factor is associated with the core the holoenzyme is formed, which can initiate transcription.

The catalysed reaction is RNA(n) + a ribonucleoside 5'-triphosphate = RNA(n+1) + diphosphate. Functionally, DNA-dependent RNA polymerase catalyzes the transcription of DNA into RNA using the four ribonucleoside triphosphates as substrates. The protein is DNA-directed RNA polymerase subunit alpha of Erythrobacter litoralis (strain HTCC2594).